A 326-amino-acid polypeptide reads, in one-letter code: tRNA-modifying protein YgfZ (326 aa).

Residues Trp-27 and Trp-189 each contribute to the folate site.

It belongs to the tRNA-modifying YgfZ family.

It localises to the cytoplasm. Its function is as follows. Folate-binding protein involved in regulating the level of ATP-DnaA and in the modification of some tRNAs. It is probably a key factor in regulatory networks that act via tRNA modification, such as initiation of chromosomal replication. This chain is tRNA-modifying protein YgfZ, found in Escherichia coli O157:H7 (strain EC4115 / EHEC).